Consider the following 1211-residue polypeptide: DNA-directed RNA polymerase subunit beta' (1211 aa).

Residues cysteine 60, cysteine 62, cysteine 75, and cysteine 78 each coordinate Zn(2+). Positions 450, 452, and 454 each coordinate Mg(2+). Residues cysteine 819, cysteine 893, cysteine 900, and cysteine 903 each coordinate Zn(2+).

It belongs to the RNA polymerase beta' chain family. As to quaternary structure, the RNAP catalytic core consists of 2 alpha, 1 beta, 1 beta' and 1 omega subunit. When a sigma factor is associated with the core the holoenzyme is formed, which can initiate transcription. The cofactor is Mg(2+). It depends on Zn(2+) as a cofactor.

The catalysed reaction is RNA(n) + a ribonucleoside 5'-triphosphate = RNA(n+1) + diphosphate. DNA-dependent RNA polymerase catalyzes the transcription of DNA into RNA using the four ribonucleoside triphosphates as substrates. This Streptococcus equi subsp. zooepidemicus (strain H70) protein is DNA-directed RNA polymerase subunit beta'.